The primary structure comprises 158 residues: Large ribosomal subunit protein uL13 (158 aa).

It belongs to the universal ribosomal protein uL13 family. Part of the 50S ribosomal subunit.

This protein is one of the early assembly proteins of the 50S ribosomal subunit, although it is not seen to bind rRNA by itself. It is important during the early stages of 50S assembly. This Rickettsia canadensis (strain McKiel) protein is Large ribosomal subunit protein uL13.